Consider the following 311-residue polypeptide: Malate dehydrogenase (311 aa).

Residues 7 to 13 (GAAGGIG) and aspartate 34 each bind NAD(+). Residues arginine 81 and arginine 87 each contribute to the substrate site. NAD(+) contacts are provided by residues asparagine 94 and 117–119 (ITN). The substrate site is built by asparagine 119 and arginine 153. Histidine 177 acts as the Proton acceptor in catalysis. Methionine 227 serves as a coordination point for NAD(+).

This sequence belongs to the LDH/MDH superfamily. MDH type 1 family. In terms of assembly, homodimer.

It carries out the reaction (S)-malate + NAD(+) = oxaloacetate + NADH + H(+). Catalyzes the reversible oxidation of malate to oxaloacetate. This is Malate dehydrogenase from Shewanella frigidimarina (strain NCIMB 400).